The following is a 433-amino-acid chain: Putative wall-associated receptor kinase-like 16 (433 aa).

The first 22 residues, 1 to 22, serve as a signal peptide directing secretion; the sequence is MKLQHVVYLVAIFFVVAIFVIA. The Extracellular segment spans residues 23-29; sequence CIEENKY. Residues 30-50 traverse the membrane as a helical segment; it reads LVWIMIILANTTNILSLVRSI. The Cytoplasmic segment spans residues 51-433; it reads SYIKNIRKHQ…VARFDIEAGR (383 aa). The residue at position 97 (T97) is a Phosphothreonine. The 284-residue stretch at 108–391 folds into the Protein kinase domain; sequence YDVSRILGQG…RAKTTKHNWL (284 aa). Residues 114–122 and K136 each bind ATP; that span reads LGQGGQWTV. Phosphotyrosine is present on Y181. The active-site Proton acceptor is the D233. Phosphothreonine occurs at positions 267 and 272. Y280 bears the Phosphotyrosine mark.

This sequence belongs to the protein kinase superfamily. Ser/Thr protein kinase family.

It localises to the membrane. It carries out the reaction L-seryl-[protein] + ATP = O-phospho-L-seryl-[protein] + ADP + H(+). The catalysed reaction is L-threonyl-[protein] + ATP = O-phospho-L-threonyl-[protein] + ADP + H(+). Its function is as follows. Putative serine/threonine-protein kinase that may function as a signaling receptor of extracellular matrix component. In Arabidopsis thaliana (Mouse-ear cress), this protein is Putative wall-associated receptor kinase-like 16 (WAKL16).